The primary structure comprises 503 residues: Probable cytosol aminopeptidase (503 aa).

Residues lysine 270 and aspartate 275 each contribute to the Mn(2+) site. Lysine 282 is an active-site residue. Mn(2+) is bound by residues aspartate 293, aspartate 352, and glutamate 354. Arginine 356 is a catalytic residue.

It belongs to the peptidase M17 family. It depends on Mn(2+) as a cofactor.

The protein resides in the cytoplasm. It catalyses the reaction Release of an N-terminal amino acid, Xaa-|-Yaa-, in which Xaa is preferably Leu, but may be other amino acids including Pro although not Arg or Lys, and Yaa may be Pro. Amino acid amides and methyl esters are also readily hydrolyzed, but rates on arylamides are exceedingly low.. It carries out the reaction Release of an N-terminal amino acid, preferentially leucine, but not glutamic or aspartic acids.. Functionally, presumably involved in the processing and regular turnover of intracellular proteins. Catalyzes the removal of unsubstituted N-terminal amino acids from various peptides. The chain is Probable cytosol aminopeptidase from Escherichia fergusonii (strain ATCC 35469 / DSM 13698 / CCUG 18766 / IAM 14443 / JCM 21226 / LMG 7866 / NBRC 102419 / NCTC 12128 / CDC 0568-73).